The chain runs to 393 residues: Elongation factor Tu (393 aa).

The region spanning 10-203 (KPHVNIGTIG…AVDEFIPEPL (194 aa)) is the tr-type G domain. Residues 19-26 (GHVDHGKT) form a G1 region. 19-26 (GHVDHGKT) is a GTP binding site. Thr26 provides a ligand contact to Mg(2+). Positions 60–64 (GITIS) are G2. The tract at residues 81–84 (DCPG) is G3. GTP is bound by residues 81-85 (DCPGH) and 136-139 (NKVD). The segment at 136–139 (NKVD) is G4. Positions 173 to 175 (SAL) are G5.

This sequence belongs to the TRAFAC class translation factor GTPase superfamily. Classic translation factor GTPase family. EF-Tu/EF-1A subfamily. Monomer.

It is found in the cytoplasm. The enzyme catalyses GTP + H2O = GDP + phosphate + H(+). In terms of biological role, GTP hydrolase that promotes the GTP-dependent binding of aminoacyl-tRNA to the A-site of ribosomes during protein biosynthesis. The polypeptide is Elongation factor Tu (Chlorobium phaeobacteroides (strain DSM 266 / SMG 266 / 2430)).